The sequence spans 114 residues: Gamma-glutamylcyclotransferase family protein ytfP (114 aa).

The protein belongs to the gamma-glutamylcyclotransferase family.

Its subcellular location is the cytoplasm. Functionally, may play a role in antibiotic biosynthesis. The protein is Gamma-glutamylcyclotransferase family protein ytfP (ytfP) of Citrobacter rodentium (strain ICC168) (Citrobacter freundii biotype 4280).